The primary structure comprises 170 residues: uncharacterized protein (170 aa).

Residues 15–81 (EAFDEKAEKE…EREKSKSAVS (67 aa)) are a coiled coil. Residues 20-77 (KAEKEKVEKEKALKEKTEKEKAEKEKAEKEKVEKEKAEKEKAAKEKAAKEKAEREKSK) are compositionally biased toward basic and acidic residues. The tract at residues 20–95 (KAEKEKVEKE…NQNSNKGNVE (76 aa)) is disordered. Positions 78-92 (SAVSPATTNQNSNKG) are enriched in polar residues. Residues 98–118 (VAIGVLAGGAVTGVAVGGAYL) traverse the membrane as a helical segment.

Its subcellular location is the membrane. This is an uncharacterized protein from Dictyostelium discoideum (Social amoeba).